Here is a 298-residue protein sequence, read N- to C-terminus: GTP cyclohydrolase FolE2 (298 aa).

This sequence belongs to the GTP cyclohydrolase IV family.

The enzyme catalyses GTP + H2O = 7,8-dihydroneopterin 3'-triphosphate + formate + H(+). It functions in the pathway cofactor biosynthesis; 7,8-dihydroneopterin triphosphate biosynthesis; 7,8-dihydroneopterin triphosphate from GTP: step 1/1. Its function is as follows. Converts GTP to 7,8-dihydroneopterin triphosphate. The protein is GTP cyclohydrolase FolE2 of Xylella fastidiosa (strain M12).